Consider the following 2226-residue polypeptide: MVLAGLIRKLGHQLAEIRERALKSILCKIEHNLICYADLIQERQLFLHLLEWFNFPSVPMKEEVLNLLSRLVKYPPAVQHLVDVGAVEFLSKLRSNVEPNLQAEIDGILDGLFLLPSEVPALSSASYQTNQTELSKNPEILTGYFPQDKSNFQQMEVPPRPVVNQTVKCLKFSTFPWLPLTTTDRHVLSSNESSLRSSNHTLIWNTCELLKDVIMQDFPAEIFLQRPKIVQSLLSLLKLAFGDGKHRLALQSVSCLQQLCMYLRNRLNFHRDPGFFSNKHDTVSQNSSLSYCHEARGTHHSQNPSPGSSSPRPSVVGRTGQRPRGDGQDWDAASSSGSSSHAHVNSRISVHSPLDMGHIDLPELETEDTLELQFQQLSLPQFCVSILESAVPLLRTGSRQVIIRVLELLTEDMTLIGEAISTDIWDDSSLFGIDMKEKLLLVLGALGETMCYHKSSISLEQPEVMLVHHRMAFISISLFAVRLLQTLLPVEKASEFLSEPMSTALFLLSLDMPISLEYPNIHEAVVAYLEQLNSENYSIYKRTAEAVYSIECTCNFLSDIGKEGEKNLLELVELADQALRSFSYHQHFPLIKEIISICSKIWKSAQASPLLQGESQKVLLHMLSHPLPRVKAETYHCCLEITKECLGVHNVTKPVSSLCNGIHFLLHPKVLYEISVFGIQEPESEVNTAAKAILLYLLQGRLMMTALTWNKFIESLCPVIPILQGYADTEDPLGNCILLLSKASSDTEEMLPCTTRLKSMLRLLLVKKPSVRSLALKLLAFHLTSEEGADTKRPLIDARVLSRVTDLFIGKKPIELRLDDRRELVIKLETVEKVYEIFTSDDVDLVLRKSAAEQLAVIMQDIKMHAVVKKLCLIDKIIEYLNECVSQDGKVVECLVQPCLTLLRKVLCGDPVMRVSLSQQSSLLTVLFRVSLIFHEDCSVVTEVGALFCLLLFDEVSRMDMWSVNPSNKPSLPSVFSLPVSVFRRYHLPVHVIGHHAVSPYSIVLPLSADCLALKPVSDMLRIAWNLSWYHGSDNLLKQMNSETKTQEILDALKLSTEDILTLKITHMASGLQDCLHSIVQAATHREVRAAVTRMSFYLLNDRLSLKGCPGPCGVTLKSLAWHTALNRFLQVLPACTEDEKLLIDIIHFLNKLIKEQRKNSSLELLNWILELLLRHSANPLLDLLVLTESQAREETDDIRTAVRQQLQKELIALFDTLLLNFMEVTDRKCSELLYVFQTQLALKLLQCLKVTDAPHFYGLPSLERTLRGMANLTAFPGWSSHSPLTKPLDICVKYLSGLLEVITSFYVERGGNAMSFMGKGVTKSTILCLLHLSHEMMAQAGSLEWMSLWFLPLGSHSEEHIPTQQGLAWLIPLWVDRDPEVRFTSLGLGSALTTLETGCVALANSCQNISGGLWGTVVNILLDQSECSMVRREAAFILQNLLVIPMPTEIIKDYTWQGPCVHDEDSGLSLIGKPALQALLYHCHFYEHLNQMVKHCYLGRCMFDLNFSAFDRNSESNDLNGLDDSFKFWRAPSRTSQDRDPSSLSTSETTVAPSLGSTEFQPLVQSTTLLPEASHDQFVAQGHQESTSPRPPHDSSLSAPLPKLCVFVTPSLLSAMCSLLDNLLTIAPRDTAKAFRQAHLIELLCSIADATLIQTCVQELRALLPSSPPAEHTQAQVSFLLEYLSSLSRLLQSCLLVEPDLVIQDELVKPLITNIIGILTICTKDVLDKELISAFYHTWTHLFNLLAMLLRKAGAITLPFVTVALAKHWTAAIDMFCTCAGLSATCPALYTASLQFLSVLLTEEAKGHLQAKSKTHLCCSPTVASLLDDSQENQKSLEQLSDVILQCYEGKSSKDILKRVAANALMSLLAVSRRAQKHALKANLIDNCMEQMKHINAQLNLDSLRPGKAALKKKEDGVIKELSIAMQLLRNCLYQNEECKEAALEAHLVPVLHSLWPWILMDDSLMQISLQLLCVYTANFPNGCSSLCWSSCGQHPVQATHRGAVSNSLMLCILKLASQMPLENTTVQQMVFMLLSNLALSHDCKGVIQKSNFLQNFLSLALPKGGNKHLSNLTILWLKLLLNISSGEDGQQMILRLDGCLDLLTEMSKYKHKSSPLLPLLIFHNVCFSPANKPKILANEKVITVLAACLESENQNAQRIGAAALWALIYNYQKAKTALKSPSVKRRVDEAYSLAKKTFPNSEANPLNAYYLKCLENLVQLLNSS.

The disordered stretch occupies residues 295 to 345 (ARGTHHSQNPSPGSSSPRPSVVGRTGQRPRGDGQDWDAASSSGSSSHAHVN). 2 stretches are compositionally biased toward low complexity: residues 304–318 (PSPG…VVGR) and 332–343 (AASSSGSSSHAH). A Phosphoserine modification is found at Ser-310. An N6-acetyllysine modification is found at Lys-811. Residues 1534 to 1554 (SRTSQDRDPSSLSTSETTVAP) form a disordered region. Residues 1543–1554 (SSLSTSETTVAP) show a composition bias toward polar residues.

The protein belongs to the rotatin family. As to quaternary structure, interacts with PPP1R35; this interaction allows the mutual recruitment to the centriole.

The protein localises to the cytoplasm. Its subcellular location is the cytoskeleton. The protein resides in the cilium basal body. It is found in the microtubule organizing center. It localises to the centrosome. Functionally, involved in the genetic cascade that governs left-right specification. Plays a role in the maintenance of a normal ciliary structure. Required for correct asymmetric expression of NODAL, LEFTY and PITX2. This Homo sapiens (Human) protein is Rotatin.